Here is a 353-residue protein sequence, read N- to C-terminus: Rhodopsin (353 aa).

Topologically, residues Met-1–Ala-36 are extracellular. Asn-2 and Asn-15 each carry an N-linked (GlcNAc...) asparagine glycan. A helical transmembrane segment spans residues Tyr-37–Val-61. Topologically, residues Thr-62–Asn-73 are cytoplasmic. A helical transmembrane segment spans residues Tyr-74 to Tyr-96. The Extracellular segment spans residues Thr-97–Cys-110. A disulfide bridge connects residues Cys-110 and Cys-187. A helical membrane pass occupies residues Asn-111–Val-133. The 'Ionic lock' involved in activated form stabilization signature appears at Glu-134 to Trp-136. At Glu-134 to His-152 the chain is on the cytoplasmic side. A helical transmembrane segment spans residues Ala-153 to Val-173. The Extracellular portion of the chain corresponds to Gly-174–Ser-202. An N-linked (GlcNAc...) asparagine glycan is attached at Asn-200. Residues Phe-203–Gly-224 traverse the membrane as a helical segment. Residues Arg-225–Arg-252 are Cytoplasmic-facing. A helical membrane pass occupies residues Met-253–Tyr-274. Topologically, residues Ile-275–Leu-286 are extracellular. A helical transmembrane segment spans residues Phe-287–Cys-308. An N6-(retinylidene)lysine modification is found at Lys-296. Residues Met-309 to Ala-353 are Cytoplasmic-facing. 2 S-palmitoyl cysteine lipidation sites follow: Cys-322 and Cys-323. Residues Glu-330–Ala-353 are disordered. Over residues Ala-334–Ala-353 the composition is skewed to low complexity.

This sequence belongs to the G-protein coupled receptor 1 family. Opsin subfamily. Phosphorylated on some or all of the serine and threonine residues present in the C-terminal region. In terms of processing, contains one covalently linked retinal chromophore.

It localises to the membrane. It is found in the cell projection. The protein resides in the cilium. The protein localises to the photoreceptor outer segment. Functionally, photoreceptor required for image-forming vision at low light intensity. While most salt water fish species use retinal as chromophore, most freshwater fish use 3-dehydroretinal, or a mixture of retinal and 3-dehydroretinal. Light-induced isomerization of 11-cis to all-trans retinal triggers a conformational change that activates signaling via G-proteins. Subsequent receptor phosphorylation mediates displacement of the bound G-protein alpha subunit by arrestin and terminates signaling. This is Rhodopsin (rho) from Mugil cephalus (Flathead mullet).